A 294-amino-acid chain; its full sequence is Cyclin-dependent kinase A-1 (294 aa).

The Protein kinase domain occupies 4–287 (YEKVEKIGEG…ARAALEHEYF (284 aa)). Residues 10–18 (IGEGTYGVV) and Lys33 each bind ATP. Tyr15 bears the Phosphotyrosine mark. The Proton acceptor role is filled by Asp127. Position 161 is a phosphothreonine (Thr161).

The protein belongs to the protein kinase superfamily. CMGC Ser/Thr protein kinase family. CDC2/CDKX subfamily. In terms of assembly, interacts with CDT1A, CYCA2-3, CYCD2-1, CYCD3-1, CYCD4-1, CYCD4-2, CYCH1-1, CYCU1-1, CYCU2-1, CYCU2-2, CYCU3-1, CYCU4-1, CYCU4-2, CYCU4-3, CKS1, KRP2/ICK2, KRP3/ICK6, KRP4/ICK7, KRP6/ICK4, KRP7/ICK5, and C-terminal domain of KRP1/ICK1. Interacts with WEE1 and TIF4A-1/EIF4A-1. Interacts with PAS2; when phosphorylated at Tyr-15. Interacts with SMR3, SMR4, SMR5, SMR6, SMR8 and At4g14310. Binds to CYCD3-2. Component of a DREAM-like complex which modulates a variety of developmentally regulated genes and of the mitotic genes in proliferating and differentiated cells. Interacts with MYB3R3 at later and with MYB3R4 at earlier stages of leaf development. May interact with SPCH. In terms of processing, phosphorylated at Tyr-15 by WEE1. Phosphorylation at Thr-161 is important for the kinase activity and substrate binding. Binding to the anti-phosphatase PAS2 prevents dephosphorylation. As to expression, expressed in roots, stems, flowers and siliques.

It is found in the cytoplasm. The protein localises to the nucleus. The enzyme catalyses L-seryl-[protein] + ATP = O-phospho-L-seryl-[protein] + ADP + H(+). The catalysed reaction is L-threonyl-[protein] + ATP = O-phospho-L-threonyl-[protein] + ADP + H(+). It catalyses the reaction [DNA-directed RNA polymerase] + ATP = phospho-[DNA-directed RNA polymerase] + ADP + H(+). With respect to regulation, CDK kinase activated by CDKF-1. CDK kinase activity inhibited by KRP1/ICK1, KRP2/ICK2, KRP3/ICK6, KRP4/ICK7, KRP5/ICK3, KRP6/ICK4 and KRP7/ICK5. Down-regulated by phosphorylation by WEE1. Its function is as follows. Involved in the control of the cell cycle. Essential for both G1/S and G2/M (mitosis) phase transitions. Functions in cell morphogenesis as well as cell proliferation. Required for cell division (entry into mitosis) of the generative cell in male gametogenesis. Required to trigger guard mother cells (GMC) symmetric divisions at the late stage of stomatal development, probably via the regulation of G1 to S transition in the cell cycle. Required for the function of SPCH in entering the stomatal lineage. Promotes divisions in the guard cells (GCs) after the guard mother cells (GMC) symmetric division when in the presence of CYCD3-2 via the phosphorylation of SPCH. The sequence is that of Cyclin-dependent kinase A-1 from Arabidopsis thaliana (Mouse-ear cress).